Reading from the N-terminus, the 940-residue chain is AP-2 complex subunit alpha (940 aa).

Residues serine 632 and serine 634 each carry the phosphoserine modification. Positions serine 651–threonine 662 are enriched in polar residues. A disordered region spans residues serine 651–serine 679. A compositionally biased stretch (low complexity) spans serine 668 to serine 679.

It belongs to the adaptor complexes large subunit family. In terms of assembly, adaptor protein complex 2 (AP-2) is a heterotetramer composed of two large adaptins (alpha-type and beta-type subunits), a medium adaptin (mu-type subunit AP50) and a small adaptin (sigma-type subunit AP17). As to expression, expressed in the Garland cells, imaginal disks, adult midgut precursors, the antenno-maxillary complex, the endoderm, the fat bodies, and the visceral mesoderm and cells of the CNS and PNS including neuroblasts, the presumptive stomatogastric nervous system, and the lateral chordotonal sense organs.

It is found in the cell membrane. It localises to the membrane. The protein localises to the coated pit. In terms of biological role, adaptins are components of the adapter complexes which link clathrin to receptors in coated vesicles. Clathrin-associated protein complexes are believed to interact with the cytoplasmic tails of membrane proteins, leading to their selection and concentration. AP-2alpha is a subunit of the plasma membrane adapter. This is AP-2 complex subunit alpha (AP-2alpha) from Drosophila melanogaster (Fruit fly).